Reading from the N-terminus, the 198-residue chain is Secreted RxLR effector protein PITG_22926 (198 aa).

The first 20 residues, 1–20, serve as a signal peptide directing secretion; that stretch reads MLRSFLLIVATVSLFGQCKP. The RxLR-dEER motif lies at 43-52; it reads RFLRTNDEER.

This sequence belongs to the RxLR effector family. In terms of assembly, interacts with host MAP3Kbeta2 in the nucleoplasm.

The protein resides in the secreted. The protein localises to the host nucleus. Its subcellular location is the host nucleolus. Secreted effector that promotes P.infestans colonization of plant host. Specifically suppresses Avr4/Cf4- and AvrPto/Pto-triggered cell death. Targets the potato MAP3Kbeta2 kinase, a positive regulator of cell death associated with plant immunity, and perturbs signaling pathways triggered by MAP3Kbeta2. The polypeptide is Secreted RxLR effector protein PITG_22926 (Phytophthora infestans (strain T30-4) (Potato late blight agent)).